We begin with the raw amino-acid sequence, 427 residues long: Flotillin-1 (427 aa).

A phosphoserine mark is found at Ser-19, Ser-163, and Ser-385. The residue at position 387 (Thr-387) is a Phosphothreonine.

It belongs to the band 7/mec-2 family. Flotillin subfamily. Heterooligomeric complex of flotillin-1 and flotillin-2 and caveolin-1 and caveolin-2. Interacts with ECPAS.

It is found in the cell membrane. The protein resides in the endosome. It localises to the membrane. The protein localises to the caveola. Its subcellular location is the melanosome. It is found in the membrane raft. Functionally, may act as a scaffolding protein within caveolar membranes, functionally participating in formation of caveolae or caveolae-like vesicles. In Homo sapiens (Human), this protein is Flotillin-1 (FLOT1).